The chain runs to 265 residues: Glycine/sarcosine N-methyltransferase (265 aa).

S-adenosyl-L-methionine is bound by residues Tyr28, Trp36, Arg45, Ala69, Asp90, Asp116–Trp117, and Leu134. Positions 136, 169, and 208 each coordinate substrate.

This sequence belongs to the class I-like SAM-binding methyltransferase superfamily. Glycine N-methyltransferase family. In terms of assembly, monomer.

The catalysed reaction is glycine + 2 S-adenosyl-L-methionine = N,N-dimethylglycine + 2 S-adenosyl-L-homocysteine + 2 H(+). It carries out the reaction glycine + S-adenosyl-L-methionine = sarcosine + S-adenosyl-L-homocysteine + H(+). It catalyses the reaction sarcosine + S-adenosyl-L-methionine = N,N-dimethylglycine + S-adenosyl-L-homocysteine + H(+). It functions in the pathway amine and polyamine biosynthesis; betaine biosynthesis via glycine pathway; betaine from glycine: step 1/3. The protein operates within amine and polyamine biosynthesis; betaine biosynthesis via glycine pathway; betaine from glycine: step 2/3. Its activity is regulated as follows. Inhibited by acetate, dimethylglycine and S-adenosyl-L-homocysteine. Catalyzes the methylation of glycine and sarcosine to sarcosine and dimethylglycine, respectively, with S-adenosylmethionine (AdoMet) acting as the methyl donor. The polypeptide is Glycine/sarcosine N-methyltransferase (Aphanothece halophytica).